The chain runs to 506 residues: Cysteine--tRNA ligase (506 aa).

Cys-34 contributes to the Zn(2+) binding site. The short motif at 36 to 46 (PTVYDFAHIGN) is the 'HIGH' region element. Residues Cys-230, His-269, and Glu-273 each coordinate Zn(2+). Residues 302–306 (KMSKS) carry the 'KMSKS' region motif. Residue Lys-305 coordinates ATP.

It belongs to the class-I aminoacyl-tRNA synthetase family. As to quaternary structure, monomer. Requires Zn(2+) as cofactor.

The protein resides in the cytoplasm. It catalyses the reaction tRNA(Cys) + L-cysteine + ATP = L-cysteinyl-tRNA(Cys) + AMP + diphosphate. This Brucella ovis (strain ATCC 25840 / 63/290 / NCTC 10512) protein is Cysteine--tRNA ligase.